A 341-amino-acid chain; its full sequence is Protein BIG GRAIN 1-like C (341 aa).

Disordered stretches follow at residues 28–61 (DGLQ…LTTL) and 76–138 (SSTT…SDDD). Basic and acidic residues predominate over residues 52–61 (NKKDDKLTTL). Low complexity predominate over residues 76-92 (SSTTTTNSSDSSSFSSS). A compositionally biased stretch (basic and acidic residues) spans 105–138 (KLAEQGKRSGDERQRTKRTVMDNDSRLFSKSDDD).

It belongs to the BIG GRAIN 1 (BG1) plant protein family.

It localises to the cell membrane. Functionally, involved in auxin transport. Regulator of the auxin signaling pathway. This chain is Protein BIG GRAIN 1-like C, found in Arabidopsis thaliana (Mouse-ear cress).